Consider the following 418-residue polypeptide: Beta-2 adrenergic receptor (418 aa).

Residues 1–34 (MGQPGNRSVFLLAPNGSHAPDQDVPQERDEAWVV) lie on the Extracellular side of the membrane. Residues asparagine 6 and asparagine 15 are each glycosylated (N-linked (GlcNAc...) asparagine). The helical transmembrane segment at 35–58 (GMAIVMSLIVLAIVFGNVLVITAI) threads the bilayer. Residues 59–71 (AKFERLQTVTNYF) are Cytoplasmic-facing. A helical membrane pass occupies residues 72 to 95 (ITSLACADLVMGLAVVPFGASHIL). The Extracellular portion of the chain corresponds to 96-106 (MKMWTFGSFWC). 2 cysteine pairs are disulfide-bonded: cysteine 106–cysteine 191 and cysteine 184–cysteine 190. The helical transmembrane segment at 107–129 (EFWISIDVLCVTASIETLCVIAV) threads the bilayer. At 130–150 (DRYLAITSPFKYQCLLTKNKA) the chain is on the cytoplasmic side. At tyrosine 141 the chain carries Phosphotyrosine. The chain crosses the membrane as a helical span at residues 151 to 174 (RVVILMVWVVSGLISFLPIKMHWY). Over 175–196 (QATHREALNCYAEEACCDFFTN) the chain is Extracellular. The helical transmembrane segment at 197 to 220 (QPYAIASSIVSFYLPLVVMVFVYS) threads the bilayer. Over 221-274 (RVFQVARRQLQKIDKSEGRFHAQNLSQAEQDGRSGPGHRRSSKFCLKEHKALKT) the chain is Cytoplasmic. A Phosphoserine modification is found at serine 246. Phosphoserine; by PKA is present on residues serine 261 and serine 262. Cysteine 265 is lipidated: S-palmitoyl cysteine. A helical transmembrane segment spans residues 275–298 (LGIIMGTFTLCWLPFFIVNIVHGI). Residues 299–305 (HDNLIPK) lie on the Extracellular side of the membrane. Residues 306–329 (EVYILLNWVGYVNSAFNPLIYCRS) traverse the membrane as a helical segment. Topologically, residues 330-418 (PDFRMAFQEL…RNCSTNDSML (89 aa)) are cytoplasmic. Cysteine 341 is lipidated: S-palmitoyl cysteine. Phosphoserine; by PKA occurs at positions 345 and 346. Phosphoserine; by BARK is present on residues serine 355 and serine 356. The tract at residues 381-418 (RLCEDAPGPEGCAHRQGTVPDDSTDSQGRNCSTNDSML) is disordered. Proline 387 and proline 400 each carry 4-hydroxyproline. The span at 405–418 (DSQGRNCSTNDSML) shows a compositional bias: polar residues. The short motif at 415-418 (DSML) is the PDZ-binding element.

Belongs to the G-protein coupled receptor 1 family. Adrenergic receptor subfamily. ADRB2 sub-subfamily. As to quaternary structure, binds NHERF1 and GPRASP1. Interacts with ARRB1 and ARRB2. Interacts with SRC. Interacts with USP20 and USP33. Interacts with VHL; the interaction, which is increased on hydroxylation of ADRB2, ubiquitinates ADRB2 leading to its degradation. Interacts with EGLN3; the interaction hydroxylates ADRB2 facilitating VHL-E3 ligase-mediated ubiquitination. Interacts (via PDZ-binding motif) with SNX27 (via PDZ domain); the interaction is required when endocytosed to prevent degradation in lysosomes and promote recycling to the plasma membrane. Interacts with CNIH4. Interacts with ARRDC3. Interacts with NEDD4. Interacts with MARCHF2. In terms of processing, palmitoylated; may reduce accessibility of Ser-345 and Ser-346 by anchoring Cys-341 to the plasma membrane. Agonist stimulation promotes depalmitoylation and further allows Ser-345 and Ser-346 phosphorylation. Post-translationally, phosphorylated by PKA and BARK upon agonist stimulation, which mediates homologous desensitization of the receptor. PKA-mediated phosphorylation seems to facilitate phosphorylation by BARK. Phosphorylation of Tyr-141 is induced by insulin and leads to supersensitization of the receptor. In terms of processing, polyubiquitinated. Agonist-induced ubiquitination leads to sort internalized receptors to the lysosomes for degradation. Deubiquitination by USP20 and USP33, leads to ADRB2 recycling and resensitization after prolonged agonist stimulation. USP20 and USP33 are constitutively associated and are dissociated immediately after agonist stimulation. Ubiquitination by the VHL-E3 ligase complex is oxygen-dependent. Post-translationally, hydroxylation by EGLN3 occurs only under normoxia and increases the interaction with VHL and the subsequent ubiquitination and degradation of ADRB2. Palmitoylated. Mainly palmitoylated at Cys-341. Palmitoylation may reduce accessibility of phosphorylation sites by anchoring the receptor to the plasma membrane. Agonist stimulation promotes depalmitoylation and further allows Ser-345 and Ser-346 phosphorylation. Also undergoes transient, ligand-induced palmitoylation at Cys-265 probably by ZDHHC9, ZDHHC14 and ZDHHC18 within the Golgi. Palmitoylation at Cys-265 requires phosphorylation by PKA and receptor internalization and stabilizes the receptor. Could be depalmitoylated by LYPLA1 at the plasma membrane. As to expression, expressed in heart, liver, lung, skeletal muscle and subcutaneous adipose tissue.

Its subcellular location is the cell membrane. It localises to the early endosome. The protein resides in the golgi apparatus. Functionally, beta-adrenergic receptors mediate the catecholamine-induced activation of adenylate cyclase through the action of G proteins. The beta-2-adrenergic receptor binds epinephrine with an approximately 30-fold greater affinity than it does norepinephrine. In Sus scrofa (Pig), this protein is Beta-2 adrenergic receptor (ADRB2).